A 35-amino-acid chain; its full sequence is MKKTFLPIFLVILLASYALANPQVTFSRDWGPGKK.

Positions 1-22 (MKKTFLPIFLVILLASYALANP) are cleaved as a signal peptide. Residue glutamine 23 is modified to Pyrrolidone carboxylic acid. Proline 32 bears the Proline amide mark.

The protein belongs to the limacoditoxin-1 (ACP-like) family. Expressed by the venom secretory cell of the spine. The spine is a cuticular structure containing a single large nucleated venom-secreting cell at its base. It is an independent unit capable of producing, storing and injecting venom. On the back of D.vulnerans caterpillars, spines are grouped together by 50 to 100 to form scoli, of which there are eight in D.vulnerans.

The protein resides in the secreted. Potently activates insect G protein-coupled receptor. It activates the ACP receptor (ACPR) from the mosquito A.aegypti (EC(50)=0.55 nM) with a potency comparable to that of the endogenous ligand. Has no activity on receptors of the closely related neuropeptides adipokinetic hormone and corazonin. In vivo, does not reveal any observable effects when injected into crickets (A.domesticus). Does not induce increase in intracellular calcium in mouse DRG neurons, suggesting that it does not induce pain. This is Z-limacoditoxin(1)-Dv1 from Doratifera vulnerans (Mottled cup moth).